The primary structure comprises 99 residues: Integration host factor subunit alpha (99 aa).

The protein belongs to the bacterial histone-like protein family. Heterodimer of an alpha and a beta chain.

In terms of biological role, this protein is one of the two subunits of integration host factor, a specific DNA-binding protein that functions in genetic recombination as well as in transcriptional and translational control. In Thioalkalivibrio sulfidiphilus (strain HL-EbGR7), this protein is Integration host factor subunit alpha.